The sequence spans 476 residues: NADH-quinone oxidoreductase subunit N (476 aa).

The next 13 helical transmembrane spans lie at 7-27, 33-53, 59-79, 100-120, 122-142, 156-176, 199-219, 237-257, 265-285, 305-325, 363-383, 399-419, and 437-457; these read LTVEILTAALGLGLLALGLLV, RGIAYVATAGLAGILAAAFGM, VVLGGYVIDPFGTYFKILFLV, GEYYALLVLATLGMMVLASSG, LVSLYLGLELMTITFCILAAF, YVLLGAMSSAIFLYGLSLVYG, LLLGTIFILAGFAFKVTAVPF, FLSVASKAAAFAALVRVFFGA, WVQLFIALAVLTIVLGNLVAI, LLLGIVSFSVLGVGAVMYYAM, VAALMLFSLLSLAGIPPMAGF, IWLAILGILMSMVSVYYYLLV, and VAPGLQVAMVVSLLILFILGI.

Belongs to the complex I subunit 2 family. NDH-1 is composed of 14 different subunits. Subunits NuoA, H, J, K, L, M, N constitute the membrane sector of the complex.

The protein resides in the cell membrane. The enzyme catalyses a quinone + NADH + 5 H(+)(in) = a quinol + NAD(+) + 4 H(+)(out). In terms of biological role, NDH-1 shuttles electrons from NADH, via FMN and iron-sulfur (Fe-S) centers, to quinones in the respiratory chain. The immediate electron acceptor for the enzyme in this species is believed to be a menaquinone. Couples the redox reaction to proton translocation (for every two electrons transferred, four hydrogen ions are translocated across the cytoplasmic membrane), and thus conserves the redox energy in a proton gradient. The chain is NADH-quinone oxidoreductase subunit N from Moorella thermoacetica (strain ATCC 39073 / JCM 9320).